The sequence spans 150 residues: Large ribosomal subunit protein bL9 (150 aa).

The protein belongs to the bacterial ribosomal protein bL9 family.

Functionally, binds to the 23S rRNA. In Corynebacterium glutamicum (strain ATCC 13032 / DSM 20300 / JCM 1318 / BCRC 11384 / CCUG 27702 / LMG 3730 / NBRC 12168 / NCIMB 10025 / NRRL B-2784 / 534), this protein is Large ribosomal subunit protein bL9.